A 162-amino-acid polypeptide reads, in one-letter code: NAD(P)H-quinone oxidoreductase subunit N (162 aa).

This sequence belongs to the complex I NdhN subunit family. In terms of assembly, NDH-1 can be composed of about 15 different subunits; different subcomplexes with different compositions have been identified which probably have different functions.

It localises to the cellular thylakoid membrane. It carries out the reaction a plastoquinone + NADH + (n+1) H(+)(in) = a plastoquinol + NAD(+) + n H(+)(out). The catalysed reaction is a plastoquinone + NADPH + (n+1) H(+)(in) = a plastoquinol + NADP(+) + n H(+)(out). In terms of biological role, NDH-1 shuttles electrons from an unknown electron donor, via FMN and iron-sulfur (Fe-S) centers, to quinones in the respiratory and/or the photosynthetic chain. The immediate electron acceptor for the enzyme in this species is believed to be plastoquinone. Couples the redox reaction to proton translocation, and thus conserves the redox energy in a proton gradient. Cyanobacterial NDH-1 also plays a role in inorganic carbon-concentration. The chain is NAD(P)H-quinone oxidoreductase subunit N from Trichormus variabilis (strain ATCC 29413 / PCC 7937) (Anabaena variabilis).